Consider the following 236-residue polypeptide: 2,3,4,5-tetrahydropyridine-2,6-dicarboxylate N-acetyltransferase (236 aa).

It belongs to the transferase hexapeptide repeat family. DapH subfamily.

It catalyses the reaction (S)-2,3,4,5-tetrahydrodipicolinate + acetyl-CoA + H2O = L-2-acetamido-6-oxoheptanedioate + CoA. Its pathway is amino-acid biosynthesis; L-lysine biosynthesis via DAP pathway; LL-2,6-diaminopimelate from (S)-tetrahydrodipicolinate (acetylase route): step 1/3. Catalyzes the transfer of an acetyl group from acetyl-CoA to tetrahydrodipicolinate. The sequence is that of 2,3,4,5-tetrahydropyridine-2,6-dicarboxylate N-acetyltransferase from Bacillus pumilus (strain SAFR-032).